We begin with the raw amino-acid sequence, 782 residues long: ATP-dependent 6-phosphofructokinase, muscle type (782 aa).

Position 2 is an N-acetylthreonine (Thr-2). The segment at 2-390 (THEEHHAAKT…NWEVYKLLAH (389 aa)) is N-terminal catalytic PFK domain 1. Residues Gly-25, 88–89 (RC), and 118–121 (GDGS) each bind ATP. Asp-119 provides a ligand contact to Mg(2+). Ser-133 carries the post-translational modification Phosphoserine. Substrate-binding positions include 164 to 166 (SID), Arg-201, 208 to 210 (MGR), Glu-264, Arg-292, and 298 to 301 (HVQR). Asp-166 functions as the Proton acceptor in the catalytic mechanism. Phosphoserine is present on Ser-377. The interdomain linker stretch occupies residues 391–403 (IRPPVSKTSATMH). The C-terminal regulatory PFK domain 2 stretch occupies residues 404–782 (TVAVMNVGAP…SRKRSGETSI (379 aa)). Beta-D-fructose 2,6-bisphosphate is bound by residues Arg-473 and 530–534 (TVSNN). The O-linked (GlcNAc) serine glycan is linked to Ser-532. Lys-559 carries the post-translational modification N6-(2-hydroxyisobutyryl)lysine. Beta-D-fructose 2,6-bisphosphate is bound by residues Arg-568, 575–577 (MGG), Glu-631, Arg-657, and 663–666 (HMQQ). Ser-669 is modified (phosphoserine). Arg-737 contributes to the beta-D-fructose 2,6-bisphosphate binding site. Ser-777 is modified (phosphoserine).

This sequence belongs to the phosphofructokinase type A (PFKA) family. ATP-dependent PFK group I subfamily. Eukaryotic two domain clade 'E' sub-subfamily. In terms of assembly, homo- and heterotetramers. Phosphofructokinase (PFK) enzyme functions as a tetramer composed of different combinations of 3 types of subunits, called PFKM (M), PFKL (L) and PFKP (P). The composition of the PFK tetramer differs according to the tissue type it is present in. The kinetic and regulatory properties of the tetrameric enzyme are dependent on the subunit composition, hence can vary across tissues. Interacts (via C-terminus) with HK1 (via N-terminal spermatogenic cell-specific region). The cofactor is Mg(2+). In terms of processing, glcNAcylation decreases enzyme activity.

The protein resides in the cytoplasm. The enzyme catalyses beta-D-fructose 6-phosphate + ATP = beta-D-fructose 1,6-bisphosphate + ADP + H(+). It participates in carbohydrate degradation; glycolysis; D-glyceraldehyde 3-phosphate and glycerone phosphate from D-glucose: step 3/4. Allosterically activated by ADP, AMP, or fructose 2,6-bisphosphate, and allosterically inhibited by ATP or citrate. Its function is as follows. Catalyzes the phosphorylation of D-fructose 6-phosphate to fructose 1,6-bisphosphate by ATP, the first committing step of glycolysis. The polypeptide is ATP-dependent 6-phosphofructokinase, muscle type (PFKM) (Canis lupus familiaris (Dog)).